Reading from the N-terminus, the 333-residue chain is Glutamyl-tRNA reductase (333 aa).

Substrate contacts are provided by residues 60–63, Ser-110, 115–117, and Gln-121; these read TCHR and ETE. The active-site Nucleophile is the Cys-61. NADP(+) is bound at residue 189–194; sequence GYSEIN.

This sequence belongs to the glutamyl-tRNA reductase family. In terms of assembly, homodimer.

The enzyme catalyses (S)-4-amino-5-oxopentanoate + tRNA(Glu) + NADP(+) = L-glutamyl-tRNA(Glu) + NADPH + H(+). Its pathway is porphyrin-containing compound metabolism; protoporphyrin-IX biosynthesis; 5-aminolevulinate from L-glutamyl-tRNA(Glu): step 1/2. Functionally, catalyzes the NADPH-dependent reduction of glutamyl-tRNA(Glu) to glutamate 1-semialdehyde (GSA). In Chlamydia muridarum (strain MoPn / Nigg), this protein is Glutamyl-tRNA reductase.